A 465-amino-acid chain; its full sequence is Interferon-inducible GTPase 5 (465 aa).

The region spanning 53–235 is the IRG-type G domain; that stretch reads TRLEVGVTGE…PLLMSTWERD (183 aa). GTP contacts are provided by residues 62–69, 87–91, 169–171, and 216–218; these read ESGAGKSS, TGVVE, KVD, and SNL. Phosphoserine occurs at positions 247 and 304. The segment at 405–438 is disordered; that stretch reads EEEEDTQPDVSLEAAGDNGVEKRGSGEGSMEEAP.

Belongs to the TRAFAC class dynamin-like GTPase superfamily. IRG family.

It is found in the cell projection. Its subcellular location is the cilium. It localises to the flagellum. The protein localises to the lipid droplet. The catalysed reaction is GTP + H2O = GDP + phosphate + H(+). Functionally, required for sperm motility and therefore male fertility, via positive regulation of spermatozoa fibrous sheath formation. This Bos taurus (Bovine) protein is Interferon-inducible GTPase 5 (IRGC).